Here is a 366-residue protein sequence, read N- to C-terminus: tRNA/tmRNA (uracil-C(5))-methyltransferase (366 aa).

Residues Gln-190, Tyr-218, Asn-223, Glu-239, and Asp-299 each coordinate S-adenosyl-L-methionine. Cys-324 acts as the Nucleophile in catalysis. The Proton acceptor role is filled by Glu-358.

This sequence belongs to the class I-like SAM-binding methyltransferase superfamily. RNA M5U methyltransferase family. TrmA subfamily.

The enzyme catalyses uridine(54) in tRNA + S-adenosyl-L-methionine = 5-methyluridine(54) in tRNA + S-adenosyl-L-homocysteine + H(+). It catalyses the reaction uridine(341) in tmRNA + S-adenosyl-L-methionine = 5-methyluridine(341) in tmRNA + S-adenosyl-L-homocysteine + H(+). Dual-specificity methyltransferase that catalyzes the formation of 5-methyluridine at position 54 (m5U54) in all tRNAs, and that of position 341 (m5U341) in tmRNA (transfer-mRNA). The protein is tRNA/tmRNA (uracil-C(5))-methyltransferase of Klebsiella pneumoniae subsp. pneumoniae (strain ATCC 700721 / MGH 78578).